Here is a 226-residue protein sequence, read N- to C-terminus: MSRGGGSYGEVGQKIDYVFKVVLIGDSAVGKSQLLARFARNEFNLDSKATIGVEFQTRTLHIDARTVKAQIWDTAGQERYRAVTSAYYRGAVGAMLVYDITKRQSFDHVARWLEELRGHADKNIVIMLIGNKSDLGTLRVVPTEDAKEFAERENLFFMETSALESTNVENAFMTVLTEIYRIVSKKNLVANEEVDSSGNSSLLKGTKIVVPGQEPAPPTKASCCMS.

Position 25 to 32 (glycine 25 to serine 32) interacts with GTP. An Effector region motif is present at residues serine 47–phenylalanine 55. GTP contacts are provided by residues aspartate 73–glutamine 77 and asparagine 131–aspartate 134. Residues cysteine 223 and cysteine 224 are each lipidated (S-geranylgeranyl cysteine).

The protein belongs to the small GTPase superfamily. Rab family.

It is found in the cell membrane. May play an important role in plant growth and development. The protein is Ras-related protein RGP1 (RGP1) of Oryza sativa subsp. japonica (Rice).